The primary structure comprises 245 residues: 1-(5-phosphoribosyl)-5-[(5-phosphoribosylamino)methylideneamino] imidazole-4-carboxamide isomerase (245 aa).

The active-site Proton acceptor is the Asp8. Asp130 (proton donor) is an active-site residue.

Belongs to the HisA/HisF family.

It localises to the cytoplasm. It carries out the reaction 1-(5-phospho-beta-D-ribosyl)-5-[(5-phospho-beta-D-ribosylamino)methylideneamino]imidazole-4-carboxamide = 5-[(5-phospho-1-deoxy-D-ribulos-1-ylimino)methylamino]-1-(5-phospho-beta-D-ribosyl)imidazole-4-carboxamide. Its pathway is amino-acid biosynthesis; L-histidine biosynthesis; L-histidine from 5-phospho-alpha-D-ribose 1-diphosphate: step 4/9. The protein is 1-(5-phosphoribosyl)-5-[(5-phosphoribosylamino)methylideneamino] imidazole-4-carboxamide isomerase of Pseudomonas putida (strain W619).